We begin with the raw amino-acid sequence, 441 residues long: MSEREVSTVPAGTDMPAAKKQKLSSDENSNPDLSGDENDDAVSIESGTNTERPDTPTNTPNAPGRKSWGKGKWKSKKCKYSFKCVNSLKEDHNQPLFGVQFNWHSKEGDPLVFATVGSNRVTLYECHSQGEIRLLQSYVDADADENFYTCAWTYDSNTSHPLLAVAGSRGIIRIINPITMQCIKHYVGHGNAINELKFHPRDPNLLLSVSKDHALRLWNIQTDTLVAIFGGVEGHRDEVLSADYDLLGEKIMSCGMDHSLKLWRINSKRMMNAIKESYDYNPNKTNRPFISQKIHFPDFSTRDIHRNYVDCVRWLGDLILSKSCENAIVCWKPGKMEDDIDKIKPSESNVTILGRFDYSQCDIWYMRFSMDFWQKMLALGNQVGKLYVWDLEVEDPHKAKCTTLTHHKCGAAIRQTSFSRDSSILIAVCDDASIWRWDRLR.

A disordered region spans residues 1–72 (MSEREVSTVP…PGRKSWGKGK (72 aa)). Position 2 is an N-acetylserine (S2). S2 and S34 each carry phosphoserine. Residues 45 to 61 (ESGTNTERPDTPTNTPN) show a composition bias toward polar residues. Position 55 is a phosphothreonine (T55). N6,N6,N6-trimethyllysine; alternate is present on K66. Position 66 is an N6,N6-dimethyllysine; alternate (K66). Residue K66 is modified to N6-methyllysine; alternate. Residues 81–441 (SFKCVNSLKE…ASIWRWDRLR (361 aa)) form an interaction with EZH2 region. 4 WD repeats span residues 91-134 (DHNQ…EIRL), 142-185 (DADE…CIKH), 188-228 (GHGN…LVAI), and 234-275 (GHRD…NAIK). Residues K197, K268, and K284 each carry the N6,N6,N6-trimethyllysine; alternate modification. N6,N6-dimethyllysine; alternate is present on residues K197, K268, and K284. Residues K197, K268, and K284 each carry the N6-methyllysine; alternate modification. 3 WD repeats span residues 304 to 341 (IHRNYVDCVRWLGDLILSKSCENAIVCWKPGKMEDDID), 359 to 399 (SQCD…PHKA), and 408 to 441 (KCGAAIRQTSFSRDSSILIAVCDDASIWRWDRLR).

It belongs to the WD repeat ESC family. In terms of assembly, component of the PRC2/EED-EZH2 complex, which includes EED, EZH2, SUZ12, RBBP4 and RBBP7 and possibly AEBP2. The minimum components required for methyltransferase activity of the PRC2/EED-EZH2 complex are EED, EZH2 and SUZ12. Component of the PRC2/EED-EZH1 complex, which includes EED, EZH1, SUZ12, RBBP4 and AEBP2. The PRC2 complex may also interact with DNMT1, DNMT3A, DNMT3B and PHF1 via the EZH2 subunit and with SIRT1 via the SUZ12 subunit. Interacts with HDAC, HDAC2, histone H1, KMT2A/MLL1 and YY1. May interact with ITGA4, ITGAE and ITGB7. Interacts with CDYL. Interacts with BMAL1. Methylated. Binding to histone H1 'Lys-26' promotes mono-, di-, and trimethylation of internal lysines.

It localises to the nucleus. In terms of biological role, polycomb group (PcG) protein. Component of the PRC2/EED-EZH2 complex, which methylates 'Lys-9' and 'Lys-27' of histone H3, leading to transcriptional repression of the affected target gene. Also recognizes 'Lys-26' trimethylated histone H1 with the effect of inhibiting PRC2 complex methyltransferase activity on nucleosomal histone H3 'Lys-27', whereas H3 'Lys-27' recognition has the opposite effect, enabling the propagation of this repressive mark. The PRC2/EED-EZH2 complex may also serve as a recruiting platform for DNA methyltransferases, thereby linking two epigenetic repression systems. The polypeptide is Polycomb protein EED (EED) (Bos taurus (Bovine)).